We begin with the raw amino-acid sequence, 289 residues long: ATP synthase gamma chain (289 aa).

Belongs to the ATPase gamma chain family. F-type ATPases have 2 components, CF(1) - the catalytic core - and CF(0) - the membrane proton channel. CF(1) has five subunits: alpha(3), beta(3), gamma(1), delta(1), epsilon(1). CF(0) has three main subunits: a, b and c.

The protein resides in the cell inner membrane. In terms of biological role, produces ATP from ADP in the presence of a proton gradient across the membrane. The gamma chain is believed to be important in regulating ATPase activity and the flow of protons through the CF(0) complex. This is ATP synthase gamma chain from Nitrosococcus oceani (strain ATCC 19707 / BCRC 17464 / JCM 30415 / NCIMB 11848 / C-107).